We begin with the raw amino-acid sequence, 323 residues long: Ribonuclease Z (323 aa).

Zn(2+)-binding residues include histidine 62, histidine 64, aspartate 66, histidine 67, histidine 140, aspartate 211, and histidine 270. The Proton acceptor role is filled by aspartate 66.

Belongs to the RNase Z family. As to quaternary structure, homodimer. Zn(2+) serves as cofactor.

The catalysed reaction is Endonucleolytic cleavage of RNA, removing extra 3' nucleotides from tRNA precursor, generating 3' termini of tRNAs. A 3'-hydroxy group is left at the tRNA terminus and a 5'-phosphoryl group is left at the trailer molecule.. Its function is as follows. Zinc phosphodiesterase, which displays some tRNA 3'-processing endonuclease activity. Probably involved in tRNA maturation, by removing a 3'-trailer from precursor tRNA. In Marinobacter nauticus (strain ATCC 700491 / DSM 11845 / VT8) (Marinobacter aquaeolei), this protein is Ribonuclease Z.